Reading from the N-terminus, the 156-residue chain is Small ribosomal subunit protein uS7 (156 aa).

Belongs to the universal ribosomal protein uS7 family. In terms of assembly, part of the 30S ribosomal subunit. Contacts proteins S9 and S11.

Functionally, one of the primary rRNA binding proteins, it binds directly to 16S rRNA where it nucleates assembly of the head domain of the 30S subunit. Is located at the subunit interface close to the decoding center, probably blocks exit of the E-site tRNA. This is Small ribosomal subunit protein uS7 from Geotalea daltonii (strain DSM 22248 / JCM 15807 / FRC-32) (Geobacter daltonii).